The primary structure comprises 57 residues: Large ribosomal subunit protein bL32 (57 aa).

This sequence belongs to the bacterial ribosomal protein bL32 family.

In Shouchella clausii (strain KSM-K16) (Alkalihalobacillus clausii), this protein is Large ribosomal subunit protein bL32.